The following is a 487-amino-acid chain: NGFI-A-binding protein 1 (487 aa).

The segment at 4 to 82 is NCD1; sequence ALPRTLGELQ…RDWVTNPGLF (79 aa). Glycyl lysine isopeptide (Lys-Gly) (interchain with G-Cter in SUMO2) cross-links involve residues Lys126, Lys129, and Lys143. Residues 162–188 are disordered; that stretch reads QGHHATESEHSLSPADLGSPASPKESS. Phosphoserine occurs at positions 172 and 183. Lys212 participates in a covalent cross-link: Glycyl lysine isopeptide (Lys-Gly) (interchain with G-Cter in SUMO2). Residues 221-310 are NCD2; sequence LLKTNKKLAK…ARQISREVTY (90 aa). Positions 307–338 are necessary for nuclear localization; sequence EVTYKYTYRTTKSKCGERDELSPKRIKVEDGF. Position 328 is a phosphoserine (Ser328). Lys333 participates in a covalent cross-link: Glycyl lysine isopeptide (Lys-Gly) (interchain with G-Cter in SUMO1); alternate. A Glycyl lysine isopeptide (Lys-Gly) (interchain with G-Cter in SUMO2); alternate cross-link involves residue Lys333. Residues Lys355, Lys369, and Lys373 each participate in a glycyl lysine isopeptide (Lys-Gly) (interchain with G-Cter in SUMO2) cross-link. The segment at 399 to 434 is disordered; the sequence is YRQSSEEHSPNGLTSDNSDGQGERPLNLRMPNLQNR. Ser407 is modified (phosphoserine). The span at 409–418 shows a compositional bias: polar residues; that stretch reads NGLTSDNSDG. Residues Lys454, Lys465, and Lys477 each participate in a glycyl lysine isopeptide (Lys-Gly) (interchain with G-Cter in SUMO2) cross-link. Residue Lys480 forms a Glycyl lysine isopeptide (Lys-Gly) (interchain with G-Cter in SUMO1); alternate linkage. Residue Lys480 forms a Glycyl lysine isopeptide (Lys-Gly) (interchain with G-Cter in SUMO2); alternate linkage.

This sequence belongs to the NAB family. Homomultimers may associate with EGR1 bound to DNA. Isoform Short is found in myeloid leukemia cell line KG-1.

It is found in the nucleus. Acts as a transcriptional repressor for zinc finger transcription factors EGR1 and EGR2. The sequence is that of NGFI-A-binding protein 1 (NAB1) from Homo sapiens (Human).